Here is a 341-residue protein sequence, read N- to C-terminus: uncharacterized protein (341 aa).

Residues 315-337 form a helical membrane-spanning segment; the sequence is VAAWFSGIAGGTFLALKLVSLMM.

It localises to the cell membrane. This is an uncharacterized protein from Bacillus subtilis (strain 168).